A 173-amino-acid polypeptide reads, in one-letter code: Crossover junction endodeoxyribonuclease RuvC (173 aa).

Residues D11, E71, and D143 contribute to the active site. Positions 11, 71, and 143 each coordinate Mg(2+).

The protein belongs to the RuvC family. In terms of assembly, homodimer which binds Holliday junction (HJ) DNA. The HJ becomes 2-fold symmetrical on binding to RuvC with unstacked arms; it has a different conformation from HJ DNA in complex with RuvA. In the full resolvosome a probable DNA-RuvA(4)-RuvB(12)-RuvC(2) complex forms which resolves the HJ. Mg(2+) is required as a cofactor.

Its subcellular location is the cytoplasm. The enzyme catalyses Endonucleolytic cleavage at a junction such as a reciprocal single-stranded crossover between two homologous DNA duplexes (Holliday junction).. The RuvA-RuvB-RuvC complex processes Holliday junction (HJ) DNA during genetic recombination and DNA repair. Endonuclease that resolves HJ intermediates. Cleaves cruciform DNA by making single-stranded nicks across the HJ at symmetrical positions within the homologous arms, yielding a 5'-phosphate and a 3'-hydroxyl group; requires a central core of homology in the junction. The consensus cleavage sequence is 5'-(A/T)TT(C/G)-3'. Cleavage occurs on the 3'-side of the TT dinucleotide at the point of strand exchange. HJ branch migration catalyzed by RuvA-RuvB allows RuvC to scan DNA until it finds its consensus sequence, where it cleaves and resolves the cruciform DNA. The protein is Crossover junction endodeoxyribonuclease RuvC of Brucella abortus (strain 2308).